The sequence spans 101 residues: Interleukin-8 (101 aa).

Positions 1-22 (MTSKLAVALLAAFLLSAALCEG) are cleaved as a signal peptide. R27 bears the Citrulline mark. 2 disulfide bridges follow: C34/C61 and C36/C77.

This sequence belongs to the intercrine alpha (chemokine CxC) family. As to quaternary structure, homodimer. Interacts with TNFAIP6 (via Link domain); this interaction interferes with chemokine binding to glycosaminoglycans. Citrullination at Arg-27 prevents proteolysis, and dampens tissue inflammation, it also enhances leukocytosis, possibly through impaired chemokine clearance from the blood circulation.

It localises to the secreted. Its function is as follows. Chemotactic factor that mediates inflammatory response by attracting neutrophils, basophils, and T-cells to clear pathogens and protect the host from infection. Also plays an important role in neutrophil activation. Released in response to an inflammatory stimulus, exerts its effect by binding to the G-protein-coupled receptors CXCR1 and CXCR2, primarily found in neutrophils, monocytes and endothelial cells. G-protein heterotrimer (alpha, beta, gamma subunits) constitutively binds to CXCR1/CXCR2 receptor and activation by IL8 leads to beta and gamma subunits release from Galpha (GNAI2 in neutrophils) and activation of several downstream signaling pathways including PI3K and MAPK pathways. This is Interleukin-8 (CXCL8) from Cercocebus atys (Sooty mangabey).